The chain runs to 313 residues: Beta-lactamase BRO-1 (313 aa).

Residues 1–25 form the signal peptide; the sequence is MQRRHFLQKTLLALPIIFSGNLLTG. Residue Cys26 is the site of N-palmitoyl cysteine attachment. The S-diacylglycerol cysteine moiety is linked to residue Cys26. Ser90 (acyl-ester intermediate) is an active-site residue. 255 to 257 is a binding site for substrate; sequence KTG.

Belongs to the class-A beta-lactamase family.

Its subcellular location is the cell membrane. The catalysed reaction is a beta-lactam + H2O = a substituted beta-amino acid. The chain is Beta-lactamase BRO-1 (bla) from Moraxella catarrhalis (Branhamella catarrhalis).